Reading from the N-terminus, the 887-residue chain is Alanine--tRNA ligase (887 aa).

Zn(2+)-binding residues include H575, H579, C677, and H681.

The protein belongs to the class-II aminoacyl-tRNA synthetase family. It depends on Zn(2+) as a cofactor.

Its subcellular location is the cytoplasm. It catalyses the reaction tRNA(Ala) + L-alanine + ATP = L-alanyl-tRNA(Ala) + AMP + diphosphate. In terms of biological role, catalyzes the attachment of alanine to tRNA(Ala) in a two-step reaction: alanine is first activated by ATP to form Ala-AMP and then transferred to the acceptor end of tRNA(Ala). Also edits incorrectly charged Ser-tRNA(Ala) and Gly-tRNA(Ala) via its editing domain. This Geobacillus kaustophilus (strain HTA426) protein is Alanine--tRNA ligase.